Here is a 231-residue protein sequence, read N- to C-terminus: uncharacterized protein (231 aa).

The next 5 membrane-spanning stretches (helical) occupy residues 36–56, 58–78, 83–103, 143–163, and 170–190; these read SLLA…SFFI, SQVT…ALQW, APLN…TLTP, FTVM…ASLL, and SIVN…YILY.

This sequence belongs to the BI1 family.

It is found in the cell membrane. This is an uncharacterized protein from Campylobacter jejuni subsp. jejuni serotype O:2 (strain ATCC 700819 / NCTC 11168).